A 123-amino-acid chain; its full sequence is N(4)-acetylcytidine amidohydrolase (123 aa).

One can recognise an ASCH domain in the interval 6–101; it reads ITFYQRFEAD…EIIFWVIQFS (96 aa). K21 functions as the Proton acceptor in the catalytic mechanism. S24 (nucleophile) is an active-site residue. The Proton donor role is filled by E74.

It belongs to the N(4)-acetylcytidine amidohydrolase family.

The catalysed reaction is N(4)-acetylcytidine + H2O = cytidine + acetate + H(+). It carries out the reaction N(4)-acetyl-2'-deoxycytidine + H2O = 2'-deoxycytidine + acetate + H(+). It catalyses the reaction N(4)-acetylcytosine + H2O = cytosine + acetate + H(+). Its function is as follows. Catalyzes the hydrolysis of N(4)-acetylcytidine (ac4C). This chain is N(4)-acetylcytidine amidohydrolase, found in Haemophilus influenzae (strain ATCC 51907 / DSM 11121 / KW20 / Rd).